The primary structure comprises 30 residues: Ornithine carbamoyltransferase (30 aa).

This sequence belongs to the aspartate/ornithine carbamoyltransferase superfamily. OTCase family.

Its subcellular location is the cytoplasm. It carries out the reaction carbamoyl phosphate + L-ornithine = L-citrulline + phosphate + H(+). Its pathway is amino-acid biosynthesis; L-arginine biosynthesis; L-arginine from L-ornithine and carbamoyl phosphate: step 1/3. Its function is as follows. Has vitronectin and fibronectin-binding activity. This chain is Ornithine carbamoyltransferase (argF), found in Staphylococcus epidermidis.